Reading from the N-terminus, the 410-residue chain is uncharacterized protein (410 aa).

A signal peptide spans 1–41 (MVKSFRMKALIAGAAVAAAVSAGAVSDVPAAKVLQPTAAYA).

In terms of assembly, interacts with PcrA, Pdp, YclM, YkvL, YhcQ and YomL. The interaction with PcrA is not essential for cell viability or repair of UV-induced lesions.

The protein localises to the secreted. Functionally, increases the processivity of the PcrA helicase, but does not bind to DNA. This is an uncharacterized protein from Bacillus subtilis (strain 168).